We begin with the raw amino-acid sequence, 292 residues long: Transforming growth factor-beta receptor type 3-like protein (292 aa).

The N-terminal stretch at 1 to 16 is a signal peptide; that stretch reads MLGTVLLLALLPGITT. A ZP; truncated domain is found at 17-170; sequence LPSGPPAPPF…APAPLTPPPP (154 aa). At 17–244 the chain is on the extracellular side; that stretch reads LPSGPPAPPF…PAPAALEPAP (228 aa). Cys85 and Cys147 are disulfide-bonded. A disordered region spans residues 160-236; it reads RAPAPLTPPP…AVRPEPPAPA (77 aa). 2 stretches are compositionally biased toward pro residues: residues 164–175 and 213–222; these read PLTPPPPPPPSR and PRPPPRPPKS. The helical transmembrane segment at 245 to 265 threads the bilayer; that stretch reads VVALVLAAFVLGAALAAGLGL. At 266 to 292 the chain is on the cytoplasmic side; the sequence is VCAHSAPHAPGPPARASPSGPQPRRSQ. The tract at residues 273–292 is disordered; the sequence is HAPGPPARASPSGPQPRRSQ. Over residues 281-292 the composition is skewed to low complexity; it reads ASPSGPQPRRSQ.

Post-translationally, glycosylated. Expressed in pituitary gland gonadotrope cells.

Its subcellular location is the cell membrane. Its function is as follows. Expressed in gonadotrope cells, acts as an inhibin B coreceptor and regulates follicle-stimulating hormone (FSH) levels and female fertility. The protein is Transforming growth factor-beta receptor type 3-like protein of Homo sapiens (Human).